Reading from the N-terminus, the 316-residue chain is MPDIKLFAGNATPELAKRISERLYISLGNATVGRFSDGEIQVQINENVRGSDVFIIQSTCAPTNDNLMELIVMVDALRRASAGRITAVIPYFGYSRQDRRVRSARVPITAKVVADFLSSVGVDRVLTCDLHAEQIQGFFDVPVDNVFGSPVLIDDILKKKDLVNPIVVSPDIGGVVRARAVAKLLNDTDMAIIDKRRPKANVSQVMHIIGDVTDRDCILVDDMIDTGGTLVKAAEALKERGARRVFAYATHAVFSGSAANNLANPALDEVVVTDTIPLSDEIEALNKVRVLTLSSMLAEAIRRISNEESISAMFDA.

Residues 37–39 (DGE) and 96–97 (RQ) contribute to the ATP site. 2 residues coordinate Mg(2+): His-131 and Asp-171. Lys-195 is an active-site residue. Residues Arg-197, Asp-221, and 225 to 229 (DTGGT) contribute to the D-ribose 5-phosphate site.

It belongs to the ribose-phosphate pyrophosphokinase family. Class I subfamily. In terms of assembly, homohexamer. Mg(2+) is required as a cofactor.

It is found in the cytoplasm. The catalysed reaction is D-ribose 5-phosphate + ATP = 5-phospho-alpha-D-ribose 1-diphosphate + AMP + H(+). It functions in the pathway metabolic intermediate biosynthesis; 5-phospho-alpha-D-ribose 1-diphosphate biosynthesis; 5-phospho-alpha-D-ribose 1-diphosphate from D-ribose 5-phosphate (route I): step 1/1. Involved in the biosynthesis of the central metabolite phospho-alpha-D-ribosyl-1-pyrophosphate (PRPP) via the transfer of pyrophosphoryl group from ATP to 1-hydroxyl of ribose-5-phosphate (Rib-5-P). This chain is Ribose-phosphate pyrophosphokinase, found in Haemophilus ducreyi (strain 35000HP / ATCC 700724).